We begin with the raw amino-acid sequence, 329 residues long: Malate dehydrogenase (329 aa).

NAD(+) is bound at residue 12 to 18; the sequence is GAAGQIG. The substrate site is built by Arg-93 and Arg-99. NAD(+) contacts are provided by residues Asn-106, Gln-113, and 130 to 132; that span reads TGN. Residues Asn-132 and Arg-163 each contribute to the substrate site. His-188 (proton acceptor) is an active-site residue.

Belongs to the LDH/MDH superfamily. MDH type 2 family.

It carries out the reaction (S)-malate + NAD(+) = oxaloacetate + NADH + H(+). Its function is as follows. Catalyzes the reversible oxidation of malate to oxaloacetate. The chain is Malate dehydrogenase from Mycobacterium leprae (strain TN).